The chain runs to 431 residues: Glutamyl-tRNA(Gln) amidotransferase subunit A (431 aa).

Residues Lys37 and Ser112 each act as charge relay system in the active site. Residue Ser136 is the Acyl-ester intermediate of the active site.

The protein belongs to the amidase family. GatA subfamily. Heterotrimer of A, B and C subunits.

It catalyses the reaction L-glutamyl-tRNA(Gln) + L-glutamine + ATP + H2O = L-glutaminyl-tRNA(Gln) + L-glutamate + ADP + phosphate + H(+). Its function is as follows. Allows the formation of correctly charged Gln-tRNA(Gln) through the transamidation of misacylated Glu-tRNA(Gln) in organisms which lack glutaminyl-tRNA synthetase. The reaction takes place in the presence of glutamine and ATP through an activated gamma-phospho-Glu-tRNA(Gln). This chain is Glutamyl-tRNA(Gln) amidotransferase subunit A, found in Methanospirillum hungatei JF-1 (strain ATCC 27890 / DSM 864 / NBRC 100397 / JF-1).